We begin with the raw amino-acid sequence, 1957 residues long: Chromatin modification-related protein EAF1 A (1957 aa).

Disordered regions lie at residues 108-208 (ASPH…TDLV), 261-287 (NRVS…GSKT), 323-373 (GGSP…SHAN), and 449-469 (NQSH…ETEK). A compositionally biased stretch (basic and acidic residues) spans 140-151 (SENKSVEGERNL). Composition is skewed to polar residues over residues 261–270 (NRVSSNSLNT), 333–342 (GQKNSSTQLN), and 355–372 (TNRG…SSHA). The HSA domain maps to 563 to 641 (CGTAPVEVRE…LSNAILQFWS (79 aa)). Disordered regions lie at residues 833–909 (GSNS…AVQK) and 928–950 (AETS…DQTW). Polar residues predominate over residues 884-898 (TDASSGDTSSFQDEY). Positions 1049-1105 (SGNPWSLFEDQALVVLVHDMGPNWELISDAMNSTLKIKCIYRNPTECKDRHKILMDK) constitute an SANT domain. Disordered regions lie at residues 1107–1131 (AGDG…PGIP), 1282–1314 (TPVL…GLQS), 1344–1367 (LSGR…DRGH), 1449–1644 (QGNS…QQLN), 1687–1768 (PVRP…IAPA), 1804–1840 (ELSK…PQAS), and 1876–1957 (SSNT…TKVE). Composition is skewed to polar residues over residues 1116-1125 (DSGNSQSYPS), 1290-1314 (AHPS…GLQS), 1344-1358 (LSGR…STPA), 1459-1472 (SNLS…TTPV), 1479-1492 (LSQQ…SHVL), and 1501-1510 (QSPSQATGAQ). Composition is skewed to low complexity over residues 1523 to 1534 (QRYLQQQQQQQQ) and 1545 to 1562 (VQQP…NSPQ). Positions 1563-1579 (TQPPVSPQPLSMPPVSP) are enriched in pro residues. 5 stretches are compositionally biased toward polar residues: residues 1582-1595 (NINA…QKSQ), 1604-1618 (SPQS…QAGK), 1635-1644 (RQPTQGQQLN), 1691-1722 (DQQS…QQLP), and 1734-1758 (QQQM…CNIL). Over residues 1759–1768 (STSSPSIAPA) the composition is skewed to low complexity. Residues 1805-1815 (LSKKSQAERMP) show a composition bias toward basic and acidic residues. 2 stretches are compositionally biased toward polar residues: residues 1819–1832 (QSVT…SMGT) and 1876–1894 (SSNT…NQGL). Composition is skewed to basic and acidic residues over residues 1913–1922 (SEEKRPKLPE) and 1932–1942 (LASEEQPHLEE).

It belongs to the EAF1 family. Component of the NuA4 histone acetyltransferase complex. Interacts with ARP4 and SWC4, and (via HSA domain) with TAF14 and TAF14B. Expressed in leaves.

The protein resides in the nucleus. Functionally, component of the NuA4 histone acetyltransferase complex which is involved in transcriptional activation of selected genes principally by acetylation of nucleosomal histone H4 and H2A. The chain is Chromatin modification-related protein EAF1 A (EAF1A) from Arabidopsis thaliana (Mouse-ear cress).